We begin with the raw amino-acid sequence, 640 residues long: Chaperone protein DnaK (640 aa).

Thr201 carries the phosphothreonine; by autocatalysis modification. The span at 603–621 (AASADQGGAPGADAGNAGK) shows a compositional bias: low complexity. The segment at 603–625 (AASADQGGAPGADAGNAGKAQDD) is disordered.

Belongs to the heat shock protein 70 family.

In terms of biological role, acts as a chaperone. This is Chaperone protein DnaK from Stenotrophomonas maltophilia (strain K279a).